Consider the following 252-residue polypeptide: Probable transcriptional regulatory protein TW504 (252 aa).

It belongs to the TACO1 family.

Its subcellular location is the cytoplasm. This is Probable transcriptional regulatory protein TW504 from Tropheryma whipplei (strain TW08/27) (Whipple's bacillus).